The following is a 199-amino-acid chain: Peroxiredoxin 2 (199 aa).

The 152-residue stretch at 1–152 (MGQKAPDFTV…IIRVIKALQF (152 aa)) folds into the Thioredoxin domain. The active-site Cysteine sulfenic acid (-SOH) intermediate is cysteine 40. Arginine 115 contributes to the substrate binding site.

The protein belongs to the peroxiredoxin family. Prx6 subfamily. As to quaternary structure, homodecamer. Pentamer of dimers that assemble into a ring structure.

The protein resides in the cytoplasm. The catalysed reaction is a hydroperoxide + [thioredoxin]-dithiol = an alcohol + [thioredoxin]-disulfide + H2O. Thiol-specific peroxidase that catalyzes the reduction of hydrogen peroxide and organic hydroperoxides to water and alcohols, respectively. Plays a role in cell protection against oxidative stress by detoxifying peroxides. This chain is Peroxiredoxin 2, found in Thermoplasma acidophilum (strain ATCC 25905 / DSM 1728 / JCM 9062 / NBRC 15155 / AMRC-C165).